We begin with the raw amino-acid sequence, 295 residues long: MNSKPSWLRVKMPGGEVFEEVRDLVKRQRLNTVCEEAACPNIGECWNKRHATIMVMGDVCTRACAFCNVKTGVPRALDLGEPERVGEAISKLGLKHVVITSVDRDDLPDGGASHFAKCIREIRKRDPNVTIEILTPDFQGKPGAVDVIASARPDVYNHNLETVPRLYARVRPRAKYFNSLQLLQQVKDKTQGVFTKSGLMLGLGEQKEEVYQVMDDLRCAGVDFLVLGQYLQPTKDNIDVDRYVTPEEFEQYKRMAYAKGFSMVASSPLARSSYHAEDDFLRLRALRTARMRVAT.

Cysteine 34, cysteine 39, cysteine 45, cysteine 60, cysteine 64, cysteine 67, and serine 273 together coordinate [4Fe-4S] cluster. Residues 46–262 (WNKRHATIMV…KRMAYAKGFS (217 aa)) enclose the Radical SAM core domain.

Belongs to the radical SAM superfamily. Lipoyl synthase family. It depends on [4Fe-4S] cluster as a cofactor.

Its subcellular location is the cytoplasm. The enzyme catalyses [[Fe-S] cluster scaffold protein carrying a second [4Fe-4S](2+) cluster] + N(6)-octanoyl-L-lysyl-[protein] + 2 oxidized [2Fe-2S]-[ferredoxin] + 2 S-adenosyl-L-methionine + 4 H(+) = [[Fe-S] cluster scaffold protein] + N(6)-[(R)-dihydrolipoyl]-L-lysyl-[protein] + 4 Fe(3+) + 2 hydrogen sulfide + 2 5'-deoxyadenosine + 2 L-methionine + 2 reduced [2Fe-2S]-[ferredoxin]. The protein operates within protein modification; protein lipoylation via endogenous pathway; protein N(6)-(lipoyl)lysine from octanoyl-[acyl-carrier-protein]: step 2/2. Its function is as follows. Catalyzes the radical-mediated insertion of two sulfur atoms into the C-6 and C-8 positions of the octanoyl moiety bound to the lipoyl domains of lipoate-dependent enzymes, thereby converting the octanoylated domains into lipoylated derivatives. This is Lipoyl synthase from Anaplasma phagocytophilum (strain HZ).